Here is a 419-residue protein sequence, read N- to C-terminus: L-rhamnose isomerase (419 aa).

Positions 262, 294, and 296 each coordinate Mn(2+).

It belongs to the rhamnose isomerase family. Homotetramer. Requires Mn(2+) as cofactor.

It localises to the cytoplasm. The catalysed reaction is L-rhamnopyranose = L-rhamnulose. It participates in carbohydrate degradation; L-rhamnose degradation; glycerone phosphate from L-rhamnose: step 1/3. Catalyzes the interconversion of L-rhamnose and L-rhamnulose. This is L-rhamnose isomerase from Escherichia coli O127:H6 (strain E2348/69 / EPEC).